Reading from the N-terminus, the 86-residue chain is MANSLRGEVLTLYKNLLYLGRDYPKGADYFKRRLKNVFLKNKDVEDPEKIKELIARGEFVMKELEALYFLRKYRAMKQRYYSDTKV.

This sequence belongs to the complex I LYR family. Homotetramer. Interacts with NDUFAB1. Interacts with ETFA. Interacts with ETFB.

It localises to the mitochondrion. Functionally, acts as a regulator of the electron transfer flavoprotein by promoting the removal of flavin from the ETF holoenzyme (composed of ETFA and ETFB). This chain is Electron transfer flavoprotein regulatory factor 1, found in Mus musculus (Mouse).